Consider the following 611-residue polypeptide: Beta-hexosaminidase (611 aa).

Belongs to the glycosyl hydrolase 20 family. Homodimer.

It is found in the periplasm. The catalysed reaction is Hydrolysis of terminal non-reducing N-acetyl-D-hexosamine residues in N-acetyl-beta-D-hexosaminides.. The protein operates within glycan degradation; chitin degradation. Inhibited by mercuric ions, PNP-beta-Glc, PNP-beta-Gal, PNP-alpha-GlcNAc, and PNP-beta-S-GlcNAc. Hydrolyzes aryl-N-acetyl-beta-D-glucosaminide (aryl-beta-GlcNAc), aryl-beta-GalNAc and chitin oligosaccharides. Can hydrolyze rapidly the artificial substrates p-nitrophenyl-N-acetyl-beta-D-glucosaminide (PNP-beta-GlcNAc) and 4-methylumbelliferyl-beta-GlcNAc, and is slightly active on p-nitrophenyl-beta-GalNAc. This enzyme is not processive, i.e. when it hydrolyzes (GlcNAc)n, both products, (Glc-NAc)n-1 and the terminal GlcNAc, are released before the enzyme attacks a second molecule of (GlcNAc)n or (GlcNAc)n-1. In Vibrio furnissii, this protein is Beta-hexosaminidase.